Consider the following 249-residue polypeptide: Large ribosomal subunit protein uL4 (249 aa).

It belongs to the universal ribosomal protein uL4 family. In terms of assembly, part of the 50S ribosomal subunit.

Functionally, one of the primary rRNA binding proteins, this protein initially binds near the 5'-end of the 23S rRNA. It is important during the early stages of 50S assembly. It makes multiple contacts with different domains of the 23S rRNA in the assembled 50S subunit and ribosome. Forms part of the polypeptide exit tunnel. This is Large ribosomal subunit protein uL4 from Methanospirillum hungatei JF-1 (strain ATCC 27890 / DSM 864 / NBRC 100397 / JF-1).